A 477-amino-acid chain; its full sequence is MSSLRNLLCRLISPLCKHGSYSHLQLFLIGDVSKSENCVLSMFVTNKKFLSKDLTDNFYRKFLKVWLKCDLDSRNQIKAIFNKMMMTKNFFLLLAYLYFLYRQCKVLKILALYKIQRLTWKQIVERFKQYPIHKLNQLLEIPSFVSFNDLYYYLFQQQLMLPISTHCNIPCMKLFCLRNFEQCNDITLRYAHRASNLTYQDIFHGCSLTVPCGNFIFAMAMAMIENYCYSFDRFLIPLENNNLVPIVLNKQEKHQLPKILTFALTTVLKRSLTSSIISLPVLCFCKTKCLRYAKIDSYLTVICSKCGHCLNSGKERLKGKQTFSLSSMFYYRDRQEKNIIYSMHTDLLYCSLCGGQRLTLEKVYELYEYSVSGIQVKSVSWKAIIGTNSACTILNDSVKFDAIVACSCRTCYSMIHLQNLTINKLLKLISHSTEFQCQDCQNIYRETCLDLEDCGEICTGCKISQLAKCTQHGCDTW.

The protein belongs to the herpesviridae UL49 family.

The chain is Protein U33 (U33) from Homo sapiens (Human).